The sequence spans 393 residues: Ubiquitin-like modifier-activating enzyme 5 (393 aa).

G75, D96, K119, N142, and N175 together coordinate ATP. Zn(2+) is bound by residues C217 and C220. The Glycyl thioester intermediate role is filled by C241. Zn(2+) contacts are provided by C294 and C299.

This sequence belongs to the ubiquitin-activating E1 family. UBA5 subfamily.

Its function is as follows. E1-like enzyme which activates UFM1. The chain is Ubiquitin-like modifier-activating enzyme 5 from Bombyx mori (Silk moth).